The sequence spans 221 residues: Cytidylate kinase (221 aa).

11–19 (GPSGVGKST) is a binding site for ATP.

Belongs to the cytidylate kinase family. Type 1 subfamily.

It is found in the cytoplasm. It carries out the reaction CMP + ATP = CDP + ADP. The catalysed reaction is dCMP + ATP = dCDP + ADP. The chain is Cytidylate kinase from Mycoplasmopsis pulmonis (strain UAB CTIP) (Mycoplasma pulmonis).